Consider the following 1067-residue polypeptide: Ubiquitin conjugation factor E4 A (1067 aa).

Residues 33–57 (KEQLKQQSDELPASPDDSDNSVSES) are disordered. An N6-acetyllysine modification is found at lysine 386. The region spanning 987 to 1061 (DACDEFLDPI…QRWLAERKQQ (75 aa)) is the U-box domain.

It belongs to the ubiquitin conjugation factor E4 family.

It localises to the cytoplasm. It carries out the reaction S-ubiquitinyl-[E2 ubiquitin-conjugating enzyme]-L-cysteine + [acceptor protein]-L-lysine = [E2 ubiquitin-conjugating enzyme]-L-cysteine + N(6)-ubiquitinyl-[acceptor protein]-L-lysine.. The protein operates within protein modification; protein ubiquitination. Its function is as follows. Ubiquitin-protein ligase that probably functions as an E3 ligase in conjunction with specific E1 and E2 ligases. May also function as an E4 ligase mediating the assembly of polyubiquitin chains on substrates ubiquitinated by another E3 ubiquitin ligase. Mediates 'Lys-48'-linked polyubiquitination of substrates. The protein is Ubiquitin conjugation factor E4 A of Bos taurus (Bovine).